Reading from the N-terminus, the 802-residue chain is Bifunctional purine biosynthetic protein ADE5,7 (802 aa).

Positions 1–444 are GARS; it reads MPEITAFPQP…FRRDIAYRAL (444 aa). The ATP-grasp domain maps to 126–339; the sequence is KEFMARHNIP…LAEVLLACVE (214 aa). 157–218 provides a ligand contact to ATP; that stretch reads KPFTSGRSVI…EEYLSGPEIS (62 aa). Positions 307 and 309 each coordinate Mg(2+). Positions 455–788 are AIRS; the sequence is LTYAAAGVSV…EAWVIGEVQE (334 aa).

This sequence in the N-terminal section; belongs to the GARS family. It in the C-terminal section; belongs to the AIR synthase family. Homodimer. Mg(2+) serves as cofactor. Requires Mn(2+) as cofactor.

It is found in the cytoplasm. The protein localises to the cytosol. It catalyses the reaction 2-formamido-N(1)-(5-O-phospho-beta-D-ribosyl)acetamidine + ATP = 5-amino-1-(5-phospho-beta-D-ribosyl)imidazole + ADP + phosphate + H(+). It carries out the reaction 5-phospho-beta-D-ribosylamine + glycine + ATP = N(1)-(5-phospho-beta-D-ribosyl)glycinamide + ADP + phosphate + H(+). Its pathway is purine metabolism; IMP biosynthesis via de novo pathway; 5-amino-1-(5-phospho-D-ribosyl)imidazole from N(2)-formyl-N(1)-(5-phospho-D-ribosyl)glycinamide: step 2/2. The protein operates within purine metabolism; IMP biosynthesis via de novo pathway; N(1)-(5-phospho-D-ribosyl)glycinamide from 5-phospho-alpha-D-ribose 1-diphosphate: step 2/2. Catalyzes the second and fifth step in the 'de novo' purine biosynthesis pathway; contains phosphoribosylamine--glycine ligase (GARS) and phosphoribosylformylglycinamidine cyclo-ligase (AIRS) activities. The chain is Bifunctional purine biosynthetic protein ADE5,7 from Cryptococcus neoformans var. grubii serotype A (strain H99 / ATCC 208821 / CBS 10515 / FGSC 9487) (Filobasidiella neoformans var. grubii).